The following is a 71-amino-acid chain: Large ribosomal subunit protein uL29 (71 aa).

Positions 32–51 are disordered; sequence GVNKSTGGAPSNPGKISETK.

The protein belongs to the universal ribosomal protein uL29 family.

This Methanococcus maripaludis (strain DSM 14266 / JCM 13030 / NBRC 101832 / S2 / LL) protein is Large ribosomal subunit protein uL29.